Reading from the N-terminus, the 500-residue chain is MKLDFGSFLSDGSSILPECILISSLIIILLIDLTSEKKTYWLYFISLTSLIISITVLLFQLKEEPIFSFSGSFQTDGFNGIFRISIAFSSLLCIPLSMEYMKCTKMAITESLIFLLTATIGGMFLCGANDLIIIFITLECLSLSSYLLSGYTKKDVRSNEAAMKYLLMGGASSSILAYGFSWLYGLSGGKIQLQEIFNGLINTQMYNSTSISIVLIFIIAGIAFKLSLVPFHQWTPDVYEGAPTSVIAFFSVTSKIAGLALATRIFNTVFFSSLNEWHLILEIIAILSMILGNFIAITQTSMKRMLAYSSISQIGYFMIGVIAGDSNGYASMITYMLFYIFMNLGTFACITLFGLRTGTDNIRDYAGLYKKDPLLASFLALSLLSLGGIPPLAGFFGKLYLFWCGWKAGLYLSVSVGLFTSVISIYYYLRIVKLIVTKENEETTSYIRKYKTSSNYLVSKSPIEFSIIICVIGSTFSGIVINPVIAIVEKTISLSSFINN.

13 helical membrane passes run 14-34 (SILP…IDLT), 41-61 (WLYF…LFQL), 78-98 (FNGI…PLSM), 116-136 (LTAT…IIFI), 166-186 (LLMG…LYGL), 211-231 (ISIV…LVPF), 242-262 (APTS…LALA), 277-297 (WHLI…FIAI), 305-325 (MLAY…IAGD), 335-355 (YMLF…LFGL), 376-396 (ASFL…AGFF), 409-429 (GLYL…YYYL), and 467-487 (IIIC…VIAI).

This sequence belongs to the complex I subunit 2 family. NDH is composed of at least 16 different subunits, 5 of which are encoded in the nucleus.

Its subcellular location is the plastid. It localises to the chloroplast thylakoid membrane. The catalysed reaction is a plastoquinone + NADH + (n+1) H(+)(in) = a plastoquinol + NAD(+) + n H(+)(out). It carries out the reaction a plastoquinone + NADPH + (n+1) H(+)(in) = a plastoquinol + NADP(+) + n H(+)(out). Its function is as follows. NDH shuttles electrons from NAD(P)H:plastoquinone, via FMN and iron-sulfur (Fe-S) centers, to quinones in the photosynthetic chain and possibly in a chloroplast respiratory chain. The immediate electron acceptor for the enzyme in this species is believed to be plastoquinone. Couples the redox reaction to proton translocation, and thus conserves the redox energy in a proton gradient. This chain is NAD(P)H-quinone oxidoreductase subunit 2 B, chloroplastic, found in Anthoceros angustus (Hornwort).